The chain runs to 957 residues: Calsyntenin-3 (957 aa).

The signal sequence occupies residues Met-1 to Gly-19. The Cytoplasmic segment spans residues Met-1 to Lys-21. Topologically, residues Asn-20–Ala-848 are extracellular. The helical intramembrane region spans Ala-22–Asn-42. 2 consecutive Cadherin domains span residues Ile-29–Phe-145 and Val-146–Trp-246. Over Thr-43 to Ser-73 the chain is Cytoplasmic. An intramembrane region (helical) is located at residues Gly-74–Lys-94. The Cytoplasmic segment spans residues Glu-95–Asn-139. Positions Glu-140–Tyr-160 form an intramembrane region, helical. Topologically, residues Asp-161 to Gly-248 are cytoplasmic. A helical transmembrane segment spans residues Trp-249–Arg-269. Topologically, residues Leu-270–Gly-357 are lumenal. 5 N-linked (GlcNAc...) asparagine glycosylation sites follow: Asn-299, Asn-327, Asn-347, Asn-508, and Asn-741. The chain crosses the membrane as a helical span at residues Ala-849 to Val-869. Residues Arg-870–Tyr-957 are Cytoplasmic-facing. Residues Gln-916–Tyr-957 are disordered. Residues Gln-928–Ala-938 are compositionally biased toward acidic residues. Positions Ser-944 to Tyr-957 are enriched in basic and acidic residues.

Belongs to the calsyntenin family. Interacts (via cadherin domains) with both alpha and beta isoforms of neurexins (NRXN1, NRXN2 and NRXN3). Directly interacts with APBA2. Forms a tripartite complex with APBA2 and APP. Interacts with low affinity with KLC1. Interacts with SLC23A2/SVCT2. As to quaternary structure, interacts with CIDEA; inhibiting the lipid transferase activity of CIDEA. Interacts with CIDEC; inhibiting the lipid transferase activity of CIDEC. In terms of processing, proteolytically processed under normal cellular conditions. A primary zeta-cleavage generates a large extracellular (soluble) N-terminal domain (sAlc) and a short C-terminal transmembrane fragment (CTF1). A secondary cleavage catalyzed by gamma-secretase within the transmembrane domain releases the beta-Alc-beta chain in the extracellular milieu and produces an intracellular fragment (AlcICD). This processing is strongly suppressed in the tripartite complex formed with APBA2 and APP, which seems to prevent the association with gamma-secretase. Ubiquitinated: endoplasmic reticulum-localized protein is ubiquitinated and degraded by the endoplasmic reticulum-associated degradation (ERAD) pathway.

The protein resides in the postsynaptic cell membrane. It is found in the endoplasmic reticulum membrane. It localises to the golgi apparatus membrane. The protein localises to the cell projection. Its subcellular location is the dendrite. The protein resides in the lipid droplet. Functionally, postsynaptic adhesion molecule that binds to presynaptic neurexins to mediate both excitatory and inhibitory synapse formation. Promotes synapse development by acting as a cell adhesion molecule at the postsynaptic membrane, which associates with both neurexin-alpha and neurexin-beta proteins at the presynaptic membrane. Regulates the balance between excitatory and inhibitory synapses by inhibiting formation of excitatory parallel-fiber synapses and promoting formation of inhibitory synapses in the same neuron. May also be involved in ascorbate (vitamin C) uptake via its interaction with SLC23A2/SVCT2. Complex formation with APBA2 and APP, stabilizes APP metabolism and enhances APBA2-mediated suppression of beta-APP40 secretion, due to the retardation of intracellular APP maturation. Its function is as follows. Adipose-specific isoform that plays a key role in adaptive thermogenesis. Facilitates the efficient use of stored triglyceride by promoting multilocular morphology of thermogenic adipocytes: acts by inhibiting the activity of CIDEA and CIDEC on lipid droplets, thereby preventing lipid droplet fusion and facilitating lipid utilization. May also participate in adaptive thermogenesis by promoting sympathetic innervation of thermogenic adipose tissue: acts by driving secretion of neurotrophic factor S100B from brown adipocytes, stimulating neurite outgrowth from sympathetic neurons. In Rattus norvegicus (Rat), this protein is Calsyntenin-3.